The primary structure comprises 572 residues: Proline--tRNA ligase (572 aa).

It belongs to the class-II aminoacyl-tRNA synthetase family. ProS type 1 subfamily. Homodimer.

Its subcellular location is the cytoplasm. The enzyme catalyses tRNA(Pro) + L-proline + ATP = L-prolyl-tRNA(Pro) + AMP + diphosphate. Its function is as follows. Catalyzes the attachment of proline to tRNA(Pro) in a two-step reaction: proline is first activated by ATP to form Pro-AMP and then transferred to the acceptor end of tRNA(Pro). As ProRS can inadvertently accommodate and process non-cognate amino acids such as alanine and cysteine, to avoid such errors it has two additional distinct editing activities against alanine. One activity is designated as 'pretransfer' editing and involves the tRNA(Pro)-independent hydrolysis of activated Ala-AMP. The other activity is designated 'posttransfer' editing and involves deacylation of mischarged Ala-tRNA(Pro). The misacylated Cys-tRNA(Pro) is not edited by ProRS. In Yersinia pestis bv. Antiqua (strain Antiqua), this protein is Proline--tRNA ligase.